A 314-amino-acid polypeptide reads, in one-letter code: Ribose-phosphate pyrophosphokinase (314 aa).

Residues 37 to 39 (DGE) and 96 to 97 (RQ) each bind ATP. Residues histidine 131 and aspartate 170 each contribute to the Mg(2+) site. Lysine 194 is a catalytic residue. Residues arginine 196, aspartate 220, and 224 to 228 (DTGGT) contribute to the D-ribose 5-phosphate site.

Belongs to the ribose-phosphate pyrophosphokinase family. Class I subfamily. In terms of assembly, homohexamer. Mg(2+) is required as a cofactor.

The protein resides in the cytoplasm. The catalysed reaction is D-ribose 5-phosphate + ATP = 5-phospho-alpha-D-ribose 1-diphosphate + AMP + H(+). The protein operates within metabolic intermediate biosynthesis; 5-phospho-alpha-D-ribose 1-diphosphate biosynthesis; 5-phospho-alpha-D-ribose 1-diphosphate from D-ribose 5-phosphate (route I): step 1/1. Functionally, involved in the biosynthesis of the central metabolite phospho-alpha-D-ribosyl-1-pyrophosphate (PRPP) via the transfer of pyrophosphoryl group from ATP to 1-hydroxyl of ribose-5-phosphate (Rib-5-P). The chain is Ribose-phosphate pyrophosphokinase from Vibrio cholerae serotype O1 (strain ATCC 39315 / El Tor Inaba N16961).